Here is a 512-residue protein sequence, read N- to C-terminus: Alpha-1B-glycoprotein (512 aa).

An N-terminal signal peptide occupies residues 1–18 (MSLLATVLLLWGFTLGPG). 5 consecutive Ig-like V-type domains span residues 22 to 126 (MLDS…VTGK), 127 to 219 (EPLP…MYAS), 220 to 312 (QAPP…PVEL), 313 to 415 (MWSD…LRVN), and 416 to 512 (GPPP…IVEG). Asn-44, Asn-89, and Asn-192 each carry an N-linked (GlcNAc...) asparagine glycan. Cystine bridges form between Cys-49–Cys-96, Cys-153–Cys-195, Cys-245–Cys-292, Cys-343–Cys-392, and Cys-441–Cys-488. Residues Asn-369, Asn-381, Asn-389, and Asn-485 are each glycosylated (N-linked (GlcNAc...) asparagine).

As to quaternary structure, interacts with CRISP3. In terms of tissue distribution, expressed in the liver hepatocytes of male and female GH transgenic mice and in the liver of female, but not of male, non-transgenic mice.

Its subcellular location is the secreted. The protein is Alpha-1B-glycoprotein (A1bg) of Mus musculus (Mouse).